Reading from the N-terminus, the 141-residue chain is ATP synthase epsilon chain (141 aa).

This sequence belongs to the ATPase epsilon chain family. As to quaternary structure, F-type ATPases have 2 components, CF(1) - the catalytic core - and CF(0) - the membrane proton channel. CF(1) has five subunits: alpha(3), beta(3), gamma(1), delta(1), epsilon(1). CF(0) has three main subunits: a, b and c.

The protein resides in the cell inner membrane. Its function is as follows. Produces ATP from ADP in the presence of a proton gradient across the membrane. The sequence is that of ATP synthase epsilon chain from Burkholderia multivorans (strain ATCC 17616 / 249).